The primary structure comprises 254 residues: MSAAGGIVYVIVGGNRGIGLSLVKELSNKEGVTVFASARGPGSASELKDWSKTHSNVHIIKLDVTSLRSAKDAAMQVEKVVKCIDVLWVNSGISKSFQPVLKTSDELWMSHYQTNVLGPIHVYQAFYHLLKEGKLKNIVFTSSMAACMGGVRPNTYSAYGQSKAALNYTMKEISFELEKDGFVVVSIHPGVVNTDMFVNAMQKLASKYPEMVESIKSNAISPEQSASSMLKIVDNLKTEDNGMFYNLDGTKLPF.

Ile-18, Ser-37, Asp-63, Asn-90, Tyr-159, Lys-163, Val-192, and Thr-194 together coordinate NADP(+). Tyr-159 (proton donor) is an active-site residue. Lys-163 (lowers pKa of active site Tyr) is an active-site residue.

Belongs to the short-chain dehydrogenases/reductases (SDR) family.

It is found in the cytoplasm. It localises to the nucleus. This is an uncharacterized protein from Schizosaccharomyces pombe (strain 972 / ATCC 24843) (Fission yeast).